We begin with the raw amino-acid sequence, 357 residues long: Glutamine synthetase cytosolic isozyme (357 aa).

The GS beta-grasp domain maps to 20–100; the sequence is VIAEYIWIGG…VICDAYSPNG (81 aa). Positions 107–357 constitute a GS catalytic domain; that stretch reads KRAAAAKIFN…IAETTILWKP (251 aa).

It belongs to the glutamine synthetase family. As to quaternary structure, homooctamer.

Its subcellular location is the cytoplasm. It carries out the reaction L-glutamate + NH4(+) + ATP = L-glutamine + ADP + phosphate + H(+). The sequence is that of Glutamine synthetase cytosolic isozyme from Pinus sylvestris (Scotch pine).